The following is a 376-amino-acid chain: Erythronate-4-phosphate dehydrogenase (376 aa).

Residues serine 45 and threonine 67 each coordinate substrate. Position 147 (aspartate 147) interacts with NAD(+). The active site involves arginine 209. Aspartate 233 lines the NAD(+) pocket. The active site involves glutamate 238. The active-site Proton donor is the histidine 255. Glycine 258 is a binding site for NAD(+). Substrate is bound at residue tyrosine 259.

The protein belongs to the D-isomer specific 2-hydroxyacid dehydrogenase family. PdxB subfamily. In terms of assembly, homodimer.

Its subcellular location is the cytoplasm. The catalysed reaction is 4-phospho-D-erythronate + NAD(+) = (R)-3-hydroxy-2-oxo-4-phosphooxybutanoate + NADH + H(+). The protein operates within cofactor biosynthesis; pyridoxine 5'-phosphate biosynthesis; pyridoxine 5'-phosphate from D-erythrose 4-phosphate: step 2/5. Functionally, catalyzes the oxidation of erythronate-4-phosphate to 3-hydroxy-2-oxo-4-phosphonooxybutanoate. The sequence is that of Erythronate-4-phosphate dehydrogenase from Shewanella sp. (strain W3-18-1).